An 81-amino-acid chain; its full sequence is Short neurotoxin 2 (81 aa).

The first 21 residues, 1 to 21 (MKTLLLTLVVVTIVCLDLGYT), serve as a signal peptide directing secretion. Cystine bridges form between Cys-24–Cys-43, Cys-38–Cys-60, Cys-62–Cys-73, and Cys-74–Cys-79.

This sequence belongs to the three-finger toxin family. Short-chain subfamily. Type I alpha-neurotoxin sub-subfamily. Expressed by the venom gland.

It is found in the secreted. Functionally, binds to muscle nicotinic acetylcholine receptor (nAChR) and inhibit acetylcholine from binding to the receptor, thereby impairing neuromuscular transmission. In Hydrophis hardwickii (Hardwick's spine-bellied seasnake), this protein is Short neurotoxin 2.